A 409-amino-acid chain; its full sequence is Multifunctional CCA protein (409 aa).

Positions 8 and 11 each coordinate ATP. CTP is bound by residues Gly-8 and Arg-11. Mg(2+) is bound by residues Asp-21 and Asp-23. Residues Arg-91, Arg-137, and Arg-140 each coordinate ATP. Residues Arg-91, Arg-137, and Arg-140 each contribute to the CTP site. Residues 228–329 (TGIHTLMVVE…ITLMDQNDAW (102 aa)) form the HD domain.

It belongs to the tRNA nucleotidyltransferase/poly(A) polymerase family. Bacterial CCA-adding enzyme type 1 subfamily. As to quaternary structure, monomer. Can also form homodimers and oligomers. Mg(2+) is required as a cofactor. Ni(2+) serves as cofactor.

It carries out the reaction a tRNA precursor + 2 CTP + ATP = a tRNA with a 3' CCA end + 3 diphosphate. It catalyses the reaction a tRNA with a 3' CCA end + 2 CTP + ATP = a tRNA with a 3' CCACCA end + 3 diphosphate. In terms of biological role, catalyzes the addition and repair of the essential 3'-terminal CCA sequence in tRNAs without using a nucleic acid template. Adds these three nucleotides in the order of C, C, and A to the tRNA nucleotide-73, using CTP and ATP as substrates and producing inorganic pyrophosphate. tRNA 3'-terminal CCA addition is required both for tRNA processing and repair. Also involved in tRNA surveillance by mediating tandem CCA addition to generate a CCACCA at the 3' terminus of unstable tRNAs. While stable tRNAs receive only 3'-terminal CCA, unstable tRNAs are marked with CCACCA and rapidly degraded. This chain is Multifunctional CCA protein, found in Psychromonas ingrahamii (strain DSM 17664 / CCUG 51855 / 37).